The sequence spans 457 residues: GTPase Der (457 aa).

EngA-type G domains follow at residues 4–169 (PTIA…PENN) and 177–352 (IMMS…NQHR). GTP is bound by residues 10–17 (GRPNVGKS), 57–61 (DTGGL), 120–123 (NKCE), 183–190 (GRPNVGKS), 230–234 (DTAGI), and 295–298 (NKWD). One can recognise a KH-like domain in the interval 353–438 (RRVTTSVVNE…PLILLWRGKQ (86 aa)).

Belongs to the TRAFAC class TrmE-Era-EngA-EngB-Septin-like GTPase superfamily. EngA (Der) GTPase family. In terms of assembly, associates with the 50S ribosomal subunit.

Functionally, GTPase that plays an essential role in the late steps of ribosome biogenesis. This is GTPase Der from Prochlorococcus marinus (strain MIT 9215).